Consider the following 327-residue polypeptide: BarH-like 1 homeobox protein (327 aa).

Disordered stretches follow at residues 1 to 90 (MEGS…AQSR), 112 to 184 (APYS…ARTA), and 305 to 327 (GASEPPPPLPPLAGVLPRAAQPR). A compositionally biased stretch (low complexity) spans 33–54 (RSPLELSPRSESSSDCSSPASP). A compositionally biased stretch (polar residues) spans 79–90 (QPGQLSAPAQSR). Basic and acidic residues-rich tracts occupy residues 133-143 (AAEDFRDKLDK) and 152-166 (SEYKVKEEGDREISS). A DNA-binding region (homeobox) is located at residues 178–237 (PRKARTAFTDHQLAQLERSFERQKYLSVQDRMELAASLNLTDTQVKTWYQNRRTKWKRQT). A compositionally biased stretch (low complexity) spans 316–327 (LAGVLPRAAQPR).

Belongs to the BAR homeobox family.

Its subcellular location is the nucleus. The polypeptide is BarH-like 1 homeobox protein (BARHL1) (Homo sapiens (Human)).